A 96-amino-acid polypeptide reads, in one-letter code: MNVLKEVYSTIEKRIQEKPEGSYVVKITTDDKKTAVNKICEKVGEEAAEVILAAKDNNKAEIIYESADLIFHTMVLLAKSGITYEELSEEFKKRMK.

It belongs to the PRA-PH family.

It is found in the cytoplasm. The catalysed reaction is 1-(5-phospho-beta-D-ribosyl)-ATP + H2O = 1-(5-phospho-beta-D-ribosyl)-5'-AMP + diphosphate + H(+). It participates in amino-acid biosynthesis; L-histidine biosynthesis; L-histidine from 5-phospho-alpha-D-ribose 1-diphosphate: step 2/9. The chain is Phosphoribosyl-ATP pyrophosphatase from Methanococcus maripaludis (strain C5 / ATCC BAA-1333).